We begin with the raw amino-acid sequence, 106 residues long: UPF0060 membrane protein Rleg2_1018 (106 aa).

The next 4 membrane-spanning stretches (helical) occupy residues 4 to 24 (IIYA…WAWL), 30 to 50 (VWWL…LTLV), 58 to 78 (TFAA…WLVE), and 86 to 106 (DIGG…GPRG).

It belongs to the UPF0060 family.

The protein resides in the cell inner membrane. This Rhizobium leguminosarum bv. trifolii (strain WSM2304) protein is UPF0060 membrane protein Rleg2_1018.